Reading from the N-terminus, the 219-residue chain is Small ribosomal subunit protein uS3c (219 aa).

One can recognise a KH type-2 domain in the interval 43-118 (IKNYVQKNMK…KLNIAITRIA (76 aa)).

This sequence belongs to the universal ribosomal protein uS3 family. Part of the 30S ribosomal subunit.

It localises to the plastid. Its subcellular location is the chloroplast. The protein is Small ribosomal subunit protein uS3c (rps3) of Panax ginseng (Korean ginseng).